Here is a 309-residue protein sequence, read N- to C-terminus: 4-hydroxy-3-methylbut-2-enyl diphosphate reductase (309 aa).

Cysteine 12 lines the [4Fe-4S] cluster pocket. (2E)-4-hydroxy-3-methylbut-2-enyl diphosphate contacts are provided by histidine 43 and histidine 77. 2 residues coordinate dimethylallyl diphosphate: histidine 43 and histidine 77. Isopentenyl diphosphate contacts are provided by histidine 43 and histidine 77. [4Fe-4S] cluster is bound at residue cysteine 99. Residue histidine 127 participates in (2E)-4-hydroxy-3-methylbut-2-enyl diphosphate binding. Residue histidine 127 coordinates dimethylallyl diphosphate. Position 127 (histidine 127) interacts with isopentenyl diphosphate. Glutamate 129 functions as the Proton donor in the catalytic mechanism. A (2E)-4-hydroxy-3-methylbut-2-enyl diphosphate-binding site is contributed by threonine 167. Residue cysteine 197 coordinates [4Fe-4S] cluster. (2E)-4-hydroxy-3-methylbut-2-enyl diphosphate is bound by residues serine 225, serine 226, asparagine 227, and serine 269. The dimethylallyl diphosphate site is built by serine 225, serine 226, asparagine 227, and serine 269. Residues serine 225, serine 226, asparagine 227, and serine 269 each coordinate isopentenyl diphosphate.

The protein belongs to the IspH family. The cofactor is [4Fe-4S] cluster.

The enzyme catalyses isopentenyl diphosphate + 2 oxidized [2Fe-2S]-[ferredoxin] + H2O = (2E)-4-hydroxy-3-methylbut-2-enyl diphosphate + 2 reduced [2Fe-2S]-[ferredoxin] + 2 H(+). It carries out the reaction dimethylallyl diphosphate + 2 oxidized [2Fe-2S]-[ferredoxin] + H2O = (2E)-4-hydroxy-3-methylbut-2-enyl diphosphate + 2 reduced [2Fe-2S]-[ferredoxin] + 2 H(+). It participates in isoprenoid biosynthesis; dimethylallyl diphosphate biosynthesis; dimethylallyl diphosphate from (2E)-4-hydroxy-3-methylbutenyl diphosphate: step 1/1. Its pathway is isoprenoid biosynthesis; isopentenyl diphosphate biosynthesis via DXP pathway; isopentenyl diphosphate from 1-deoxy-D-xylulose 5-phosphate: step 6/6. Catalyzes the conversion of 1-hydroxy-2-methyl-2-(E)-butenyl 4-diphosphate (HMBPP) into a mixture of isopentenyl diphosphate (IPP) and dimethylallyl diphosphate (DMAPP). Acts in the terminal step of the DOXP/MEP pathway for isoprenoid precursor biosynthesis. The protein is 4-hydroxy-3-methylbut-2-enyl diphosphate reductase of Wolbachia sp. subsp. Brugia malayi (strain TRS).